The primary structure comprises 282 residues: U1 small nuclear ribonucleoprotein A (282 aa).

RRM domains follow at residues 10–89 (NTIY…YSKT) and 208–282 (HILF…FAKK).

The protein belongs to the RRM U1 A/B'' family. In terms of assembly, U1 snRNP is composed of the 7 core Sm proteins snrpb, snrpd1, snrpd2, snrpd3, snrpe, snrpf and snrpg that assemble in a heptameric protein ring on the Sm site of the small nuclear RNA to form the core snRNP, and at least three U1 snRNP-specific proteins snrnp70/U1-70K, snrpa/U1-A and snrpc/U1-C.

It is found in the nucleus. Component of the spliceosomal U1 snRNP, which is essential for recognition of the pre-mRNA 5' splice-site and the subsequent assembly of the spliceosome. U1 snRNP is the first snRNP to interact with pre-mRNA. This interaction is required for the subsequent binding of U2 snRNP and the U4/U6/U5 tri-snRNP. Snrpa binds stem loop II of U1 snRNA. The chain is U1 small nuclear ribonucleoprotein A (snrpa) from Xenopus laevis (African clawed frog).